The primary structure comprises 150 residues: Protein NrdI (150 aa).

This sequence belongs to the NrdI family.

Functionally, probably involved in ribonucleotide reductase function. This is Protein NrdI from Mycobacterium avium (strain 104).